The following is a 1473-amino-acid chain: DNA topoisomerase 2 (1473 aa).

Positions 1-20 (MATKLPLQNSNAANVAKAPA) are disordered. The segment covering 9–20 (NSNAANVAKAPA) has biased composition (low complexity). Residues asparagine 91, asparagine 120, 148 to 150 (SSN), and 161 to 168 (GRNGYGAK) each bind ATP. Residues 345–347 (NKK) form an interaction with DNA region. 378–380 (QTK) is a binding site for ATP. Residues 455–569 (CTLILTEGDS…SLLQVPSFLV (115 aa)) enclose the Toprim domain. 3 residues coordinate Mg(2+): glutamate 461, aspartate 538, and aspartate 540. The 460-residue stretch at 704-1163 (IPSMVDGLKP…TPKSLWLSDL (460 aa)) folds into the Topo IIA-type catalytic domain. The active-site O-(5'-phospho-DNA)-tyrosine intermediate is tyrosine 794. Residues 980-989 (KLTTTIATSN) are interaction with DNA. Disordered regions lie at residues 1195-1230 (SGAAVKVKRQAPKKPAPKKTTKKASESETTEASYSA), 1242-1297 (KPKA…EVEE), and 1313-1473 (GSAP…EDDE). 2 stretches are compositionally biased toward basic residues: residues 1200–1216 (KVKRQAPKKPAPKKTTK) and 1278–1288 (PKGRQGAKKKA). Positions 1351 to 1360 (KPAATKAAKP) are enriched in low complexity. Polar residues-rich tracts occupy residues 1394 to 1404 (SPFNKKSSSVM) and 1417 to 1427 (ENVAGNSSSEK). Residues 1453-1473 (SESESANDSEFDDIEDDEDDE) are compositionally biased toward acidic residues.

The protein belongs to the type II topoisomerase family. In terms of assembly, homodimer. Mg(2+) is required as a cofactor. Requires Mn(2+) as cofactor. The cofactor is Ca(2+).

It carries out the reaction ATP-dependent breakage, passage and rejoining of double-stranded DNA.. Control of topological states of DNA by transient breakage and subsequent rejoining of DNA strands. Topoisomerase II makes double-strand breaks. This is DNA topoisomerase 2 (TOP2) from Arabidopsis thaliana (Mouse-ear cress).